Here is a 308-residue protein sequence, read N- to C-terminus: Aspartate carbamoyltransferase catalytic subunit (308 aa).

Carbamoyl phosphate is bound by residues arginine 59 and threonine 60. Residue lysine 87 coordinates L-aspartate. The carbamoyl phosphate site is built by arginine 109, histidine 137, and glutamine 140. Positions 170 and 224 each coordinate L-aspartate. Residues glycine 265 and proline 266 each coordinate carbamoyl phosphate.

The protein belongs to the aspartate/ornithine carbamoyltransferase superfamily. ATCase family. Heterododecamer (2C3:3R2) of six catalytic PyrB chains organized as two trimers (C3), and six regulatory PyrI chains organized as three dimers (R2).

The catalysed reaction is carbamoyl phosphate + L-aspartate = N-carbamoyl-L-aspartate + phosphate + H(+). It participates in pyrimidine metabolism; UMP biosynthesis via de novo pathway; (S)-dihydroorotate from bicarbonate: step 2/3. Catalyzes the condensation of carbamoyl phosphate and aspartate to form carbamoyl aspartate and inorganic phosphate, the committed step in the de novo pyrimidine nucleotide biosynthesis pathway. This Flavobacterium psychrophilum (strain ATCC 49511 / DSM 21280 / CIP 103535 / JIP02/86) protein is Aspartate carbamoyltransferase catalytic subunit.